The sequence spans 115 residues: U3-lycotoxin-Ls1a (115 aa).

The N-terminal stretch at methionine 1–alanine 20 is a signal peptide. A propeptide spanning residues glutamate 21–arginine 44 is cleaved from the precursor. 4 disulfide bridges follow: cysteine 48–cysteine 63, cysteine 55–cysteine 72, cysteine 62–cysteine 87, and cysteine 74–cysteine 85.

It belongs to the neurotoxin 19 (CSTX) family. 01 subfamily. Expressed by the venom gland.

Its subcellular location is the secreted. In Lycosa singoriensis (Wolf spider), this protein is U3-lycotoxin-Ls1a.